The sequence spans 158 residues: Flagellar assembly factor FliW (158 aa).

It belongs to the FliW family. In terms of assembly, interacts with translational regulator CsrA and flagellin(s).

The protein localises to the cytoplasm. Acts as an anti-CsrA protein, binds CsrA and prevents it from repressing translation of its target genes, one of which is flagellin. Binds to flagellin and participates in the assembly of the flagellum. In Moorella thermoacetica (strain ATCC 39073 / JCM 9320), this protein is Flagellar assembly factor FliW.